Consider the following 196-residue polypeptide: Holliday junction branch migration complex subunit RuvA (196 aa).

A domain I region spans residues 1–63 (MINKICGKIV…EDEIRLFGFL (63 aa)). The tract at residues 64–135 (NVSEREVFEK…KLRGKLVKVN (72 aa)) is domain II. The interval 135 to 138 (NEAS) is flexible linker. Residues 139 to 196 (SGVLKFKELEQSIVNMGFDRKLVAAAIKEIMLIDEFLMLRQVDQEQFLFREILRKLSG) form a domain III region.

Belongs to the RuvA family. In terms of assembly, homotetramer. Forms an RuvA(8)-RuvB(12)-Holliday junction (HJ) complex. HJ DNA is sandwiched between 2 RuvA tetramers; dsDNA enters through RuvA and exits via RuvB. An RuvB hexamer assembles on each DNA strand where it exits the tetramer. Each RuvB hexamer is contacted by two RuvA subunits (via domain III) on 2 adjacent RuvB subunits; this complex drives branch migration. In the full resolvosome a probable DNA-RuvA(4)-RuvB(12)-RuvC(2) complex forms which resolves the HJ.

It localises to the cytoplasm. In terms of biological role, the RuvA-RuvB-RuvC complex processes Holliday junction (HJ) DNA during genetic recombination and DNA repair, while the RuvA-RuvB complex plays an important role in the rescue of blocked DNA replication forks via replication fork reversal (RFR). RuvA specifically binds to HJ cruciform DNA, conferring on it an open structure. The RuvB hexamer acts as an ATP-dependent pump, pulling dsDNA into and through the RuvAB complex. HJ branch migration allows RuvC to scan DNA until it finds its consensus sequence, where it cleaves and resolves the cruciform DNA. This Borrelia turicatae (strain 91E135) protein is Holliday junction branch migration complex subunit RuvA.